A 302-amino-acid polypeptide reads, in one-letter code: GTPase Era (302 aa).

Positions 8–175 (HSGFVAIIGR…LTTLKGQLPE (168 aa)) constitute an Era-type G domain. Positions 16-23 (GRPNVGKS) are G1. GTP is bound at residue 16–23 (GRPNVGKS). The G2 stretch occupies residues 42–46 (QTTRN). The tract at residues 63–66 (DTPG) is G3. GTP contacts are provided by residues 63-67 (DTPGI) and 125-128 (NKID). The G4 stretch occupies residues 125 to 128 (NKID). The G5 stretch occupies residues 154-156 (ISA). Residues 206–283 (TRQEVPHSTA…YLELWVKVQE (78 aa)) form the KH type-2 domain.

The protein belongs to the TRAFAC class TrmE-Era-EngA-EngB-Septin-like GTPase superfamily. Era GTPase family. As to quaternary structure, monomer.

It localises to the cytoplasm. It is found in the cell membrane. Functionally, an essential GTPase that binds both GDP and GTP, with rapid nucleotide exchange. Plays a role in 16S rRNA processing and 30S ribosomal subunit biogenesis and possibly also in cell cycle regulation and energy metabolism. This chain is GTPase Era, found in Lactiplantibacillus plantarum (strain ATCC BAA-793 / NCIMB 8826 / WCFS1) (Lactobacillus plantarum).